The sequence spans 333 residues: DNA-directed RNA polymerase subunit alpha (333 aa).

The tract at residues 1-233 (MVQEKLRFST…DLFIPFLHAE (233 aa)) is alpha N-terminal domain (alpha-NTD). Residues 266 to 333 (KKEIALKSIF…DILKIQKYFT (68 aa)) form an alpha C-terminal domain (alpha-CTD) region.

Belongs to the RNA polymerase alpha chain family. As to quaternary structure, in plastids the minimal PEP RNA polymerase catalytic core is composed of four subunits: alpha, beta, beta', and beta''. When a (nuclear-encoded) sigma factor is associated with the core the holoenzyme is formed, which can initiate transcription.

Its subcellular location is the plastid. It localises to the chloroplast. It catalyses the reaction RNA(n) + a ribonucleoside 5'-triphosphate = RNA(n+1) + diphosphate. Its function is as follows. DNA-dependent RNA polymerase catalyzes the transcription of DNA into RNA using the four ribonucleoside triphosphates as substrates. This is DNA-directed RNA polymerase subunit alpha from Phaseolus angularis (Azuki bean).